Here is a 444-residue protein sequence, read N- to C-terminus: Methylenetetrahydrofolate--tRNA-(uracil-5-)-methyltransferase TrmFO (444 aa).

Position 10-15 (10-15) interacts with FAD; the sequence is GAGLAG.

Belongs to the MnmG family. TrmFO subfamily. Requires FAD as cofactor.

It is found in the cytoplasm. The catalysed reaction is uridine(54) in tRNA + (6R)-5,10-methylene-5,6,7,8-tetrahydrofolate + NADH + H(+) = 5-methyluridine(54) in tRNA + (6S)-5,6,7,8-tetrahydrofolate + NAD(+). The enzyme catalyses uridine(54) in tRNA + (6R)-5,10-methylene-5,6,7,8-tetrahydrofolate + NADPH + H(+) = 5-methyluridine(54) in tRNA + (6S)-5,6,7,8-tetrahydrofolate + NADP(+). In terms of biological role, catalyzes the folate-dependent formation of 5-methyl-uridine at position 54 (M-5-U54) in all tRNAs. The protein is Methylenetetrahydrofolate--tRNA-(uracil-5-)-methyltransferase TrmFO of Streptococcus agalactiae serotype Ia (strain ATCC 27591 / A909 / CDC SS700).